Here is a 422-residue protein sequence, read N- to C-terminus: Aliphatic (R)-hydroxynitrile lyase (422 aa).

Residues Cys63, His85, Cys115, Cys118, Cys121, Cys129, and Cys199 each coordinate Zn(2+).

The protein belongs to the zinc-containing alcohol dehydrogenase family. As to quaternary structure, homodimer. The cofactor is Zn(2+).

The enzyme catalyses (2R)-2-hydroxy-2-methylbutanenitrile = butan-2-one + hydrogen cyanide. Functionally, involved in the catabolism of cyanogenic glycosides. Naturally occurring substrates are the aliphatic acetone cyanohydrin and butan-2-one cyanohydrin, which are the aglycones of the cyanogenic glycosides linamarin, lotaustralin, linustatin and neolinustatin. Can use various aliphatic ketones and aldehydes as substrates, but not aromatic ketones. The chain is Aliphatic (R)-hydroxynitrile lyase from Linum usitatissimum (Flax).